A 944-amino-acid polypeptide reads, in one-letter code: UvrABC system protein A (944 aa).

33 to 40 (GLSGSGKS) contributes to the ATP binding site. The segment at 252–279 (CPICGFSIGELEPRMFSFNSPFGACPTC) adopts a C4-type zinc-finger fold. ABC transporter domains follow at residues 309 to 587 (WEPT…KKSL) and 607 to 935 (ITDR…QYLK). 639–646 (GVSGSGKS) serves as a coordination point for ATP. A C4-type zinc finger spans residues 738 to 764 (CEACKGDGIIKIEMHFLPDVYVPCEVC).

This sequence belongs to the ABC transporter superfamily. UvrA family. In terms of assembly, forms a heterotetramer with UvrB during the search for lesions.

Its subcellular location is the cytoplasm. In terms of biological role, the UvrABC repair system catalyzes the recognition and processing of DNA lesions. UvrA is an ATPase and a DNA-binding protein. A damage recognition complex composed of 2 UvrA and 2 UvrB subunits scans DNA for abnormalities. When the presence of a lesion has been verified by UvrB, the UvrA molecules dissociate. This Staphylococcus epidermidis (strain ATCC 12228 / FDA PCI 1200) protein is UvrABC system protein A.